A 92-amino-acid polypeptide reads, in one-letter code: Probable Fe(2+)-trafficking protein (92 aa).

Belongs to the Fe(2+)-trafficking protein family.

Functionally, could be a mediator in iron transactions between iron acquisition and iron-requiring processes, such as synthesis and/or repair of Fe-S clusters in biosynthetic enzymes. This chain is Probable Fe(2+)-trafficking protein, found in Xanthomonas campestris pv. campestris (strain 8004).